The following is a 181-amino-acid chain: ATP synthase subunit b (181 aa).

The helical transmembrane segment at Leu24 to Val44 threads the bilayer.

This sequence belongs to the ATPase B chain family. F-type ATPases have 2 components, F(1) - the catalytic core - and F(0) - the membrane proton channel. F(1) has five subunits: alpha(3), beta(3), gamma(1), delta(1), epsilon(1). F(0) has three main subunits: a(1), b(2) and c(10-14). The alpha and beta chains form an alternating ring which encloses part of the gamma chain. F(1) is attached to F(0) by a central stalk formed by the gamma and epsilon chains, while a peripheral stalk is formed by the delta and b chains.

The protein resides in the cell membrane. F(1)F(0) ATP synthase produces ATP from ADP in the presence of a proton or sodium gradient. F-type ATPases consist of two structural domains, F(1) containing the extramembraneous catalytic core and F(0) containing the membrane proton channel, linked together by a central stalk and a peripheral stalk. During catalysis, ATP synthesis in the catalytic domain of F(1) is coupled via a rotary mechanism of the central stalk subunits to proton translocation. In terms of biological role, component of the F(0) channel, it forms part of the peripheral stalk, linking F(1) to F(0). This Mycoplasma capricolum subsp. capricolum (strain California kid / ATCC 27343 / NCTC 10154) protein is ATP synthase subunit b.